The following is a 213-amino-acid chain: Protein-L-isoaspartate O-methyltransferase (213 aa).

Serine 62 is an active-site residue.

The protein belongs to the methyltransferase superfamily. L-isoaspartyl/D-aspartyl protein methyltransferase family.

It is found in the cytoplasm. It carries out the reaction [protein]-L-isoaspartate + S-adenosyl-L-methionine = [protein]-L-isoaspartate alpha-methyl ester + S-adenosyl-L-homocysteine. Functionally, catalyzes the methyl esterification of L-isoaspartyl residues in peptides and proteins that result from spontaneous decomposition of normal L-aspartyl and L-asparaginyl residues. It plays a role in the repair and/or degradation of damaged proteins. The polypeptide is Protein-L-isoaspartate O-methyltransferase (Idiomarina loihiensis (strain ATCC BAA-735 / DSM 15497 / L2-TR)).